The sequence spans 853 residues: Protein translocase subunit SecA (853 aa).

Residues Q77, G95–T99, and D532 contribute to the ATP site.

This sequence belongs to the SecA family. In terms of assembly, monomer and homodimer. Part of the essential Sec protein translocation apparatus which comprises SecA, SecYEG and auxiliary proteins SecDF. Other proteins may also be involved.

It is found in the cell inner membrane. Its subcellular location is the cytoplasm. It catalyses the reaction ATP + H2O + cellular proteinSide 1 = ADP + phosphate + cellular proteinSide 2.. In terms of biological role, part of the Sec protein translocase complex. Interacts with the SecYEG preprotein conducting channel. Has a central role in coupling the hydrolysis of ATP to the transfer of proteins into and across the cell membrane, serving as an ATP-driven molecular motor driving the stepwise translocation of polypeptide chains across the membrane. The chain is Protein translocase subunit SecA from Thermosipho melanesiensis (strain DSM 12029 / CIP 104789 / BI429).